Reading from the N-terminus, the 312-residue chain is uncharacterized protein (312 aa).

A run of 6 helical transmembrane segments spans residues 9–29, 115–135, 187–207, 224–244, 264–284, and 292–312; these read LTLTFTFLYYSIPMLIVGLFI, LATLGFFGIIYFIILVLIGFI, ITIASIITSFLIEFGFFDYIT, ITVAVTQPINYIGAFVLAGEF, ILSSIPALRFLAPYYIGIYGF, and MISTLVRILITALFVIITLIL.

The protein resides in the cell membrane. This is an uncharacterized protein from Methanocaldococcus jannaschii (strain ATCC 43067 / DSM 2661 / JAL-1 / JCM 10045 / NBRC 100440) (Methanococcus jannaschii).